The following is a 376-amino-acid chain: 23S rRNA (uracil(747)-C(5))-methyltransferase RlmC (376 aa).

Positions 3, 11, 14, and 87 each coordinate [4Fe-4S] cluster. S-adenosyl-L-methionine contacts are provided by glutamine 212, phenylalanine 241, glutamate 262, and asparagine 307. The Nucleophile role is filled by cysteine 334.

It belongs to the class I-like SAM-binding methyltransferase superfamily. RNA M5U methyltransferase family. RlmC subfamily.

It carries out the reaction uridine(747) in 23S rRNA + S-adenosyl-L-methionine = 5-methyluridine(747) in 23S rRNA + S-adenosyl-L-homocysteine + H(+). Catalyzes the formation of 5-methyl-uridine at position 747 (m5U747) in 23S rRNA. This chain is 23S rRNA (uracil(747)-C(5))-methyltransferase RlmC, found in Pectobacterium carotovorum subsp. carotovorum (strain PC1).